A 211-amino-acid polypeptide reads, in one-letter code: Uracil phosphoribosyltransferase (211 aa).

5-phospho-alpha-D-ribose 1-diphosphate contacts are provided by residues arginine 78, arginine 103, and 130–138 (DPMLATGGT). Residues isoleucine 195 and 200-202 (GDA) contribute to the uracil site. Residue aspartate 201 coordinates 5-phospho-alpha-D-ribose 1-diphosphate.

The protein belongs to the UPRTase family. It depends on Mg(2+) as a cofactor.

It catalyses the reaction UMP + diphosphate = 5-phospho-alpha-D-ribose 1-diphosphate + uracil. It functions in the pathway pyrimidine metabolism; UMP biosynthesis via salvage pathway; UMP from uracil: step 1/1. Allosterically activated by GTP. Its function is as follows. Catalyzes the conversion of uracil and 5-phospho-alpha-D-ribose 1-diphosphate (PRPP) to UMP and diphosphate. This Arthrobacter sp. (strain FB24) protein is Uracil phosphoribosyltransferase.